Here is an 829-residue protein sequence, read N- to C-terminus: Periplasmic nitrate reductase (829 aa).

The tat-type signal signal peptide spans 1–30 (MKLSRRDFMKANAVAAAAAVAGVSAPTLAA). The 4Fe-4S Mo/W bis-MGD-type domain maps to 41-97 (IKWDKAPCRFCGTGCSVLVGSQDGRVVATQGDPDAPVNRGLNCIKGYFLSKIMYGED). [4Fe-4S] cluster is bound by residues Cys48, Cys51, Cys55, and Cys83. Mo-bis(molybdopterin guanine dinucleotide) is bound by residues Lys85, Gln152, Asn177, Cys181, 214–221 (WGSNMAEM), 245–249 (STFEH), 264–266 (QTD), Met374, Gln378, Asn484, 510–511 (SD), Lys533, Asp560, and 719–728 (TGRVLEHWHT). Residue Phe795 participates in substrate binding. The Mo-bis(molybdopterin guanine dinucleotide) site is built by Asn803 and Lys820.

This sequence belongs to the prokaryotic molybdopterin-containing oxidoreductase family. NasA/NapA/NarB subfamily. Component of the periplasmic nitrate reductase NapAB complex composed of NapA and NapB. The cofactor is [4Fe-4S] cluster. Requires Mo-bis(molybdopterin guanine dinucleotide) as cofactor. Post-translationally, predicted to be exported by the Tat system. The position of the signal peptide cleavage has not been experimentally proven.

The protein resides in the periplasm. It carries out the reaction 2 Fe(II)-[cytochrome] + nitrate + 2 H(+) = 2 Fe(III)-[cytochrome] + nitrite + H2O. Functionally, catalytic subunit of the periplasmic nitrate reductase complex NapAB. Receives electrons from NapB and catalyzes the reduction of nitrate to nitrite. This chain is Periplasmic nitrate reductase, found in Aeromonas salmonicida (strain A449).